A 158-amino-acid polypeptide reads, in one-letter code: Large ribosomal subunit protein uL11 (158 aa).

It belongs to the universal ribosomal protein uL11 family. In terms of assembly, part of the ribosomal stalk of the 50S ribosomal subunit. Interacts with L10 and the large rRNA to form the base of the stalk. L10 forms an elongated spine to which L12 dimers bind in a sequential fashion forming a multimeric L10(L12)X complex.

In terms of biological role, forms part of the ribosomal stalk which helps the ribosome interact with GTP-bound translation factors. The chain is Large ribosomal subunit protein uL11 from Methanoregula boonei (strain DSM 21154 / JCM 14090 / 6A8).